The following is an 88-amino-acid chain: Small ribosomal subunit protein uS17 (88 aa).

It belongs to the universal ribosomal protein uS17 family. Part of the 30S ribosomal subunit.

Its function is as follows. One of the primary rRNA binding proteins, it binds specifically to the 5'-end of 16S ribosomal RNA. The chain is Small ribosomal subunit protein uS17 from Nitratidesulfovibrio vulgaris (strain ATCC 29579 / DSM 644 / CCUG 34227 / NCIMB 8303 / VKM B-1760 / Hildenborough) (Desulfovibrio vulgaris).